The following is a 109-amino-acid chain: Guanylin (109 aa).

Positions 1–21 are cleaved as a signal peptide; sequence MNTFLFPTLCLLGVWAALAGG. Positions 22–94 are excised as a propeptide; sequence VTVKDGEFSF…LERLETIAQD (73 aa). Cystine bridges form between cysteine 63/cysteine 76, cysteine 98/cysteine 106, and cysteine 101/cysteine 109.

The protein belongs to the guanylin family.

It localises to the secreted. Its function is as follows. Endogenous activator of intestinal guanylate cyclase. It stimulates this enzyme through the same receptor binding region as the heat-stable enterotoxins. The polypeptide is Guanylin (GUCA2A) (Sus scrofa (Pig)).